Here is a 422-residue protein sequence, read N- to C-terminus: Phospho-N-acetylmuramoyl-pentapeptide-transferase (422 aa).

9 consecutive transmembrane segments (helical) span residues 28–48 (LMAI…FINL), 71–91 (VGVP…PCLL), 95–115 (LHNI…TLGF), 136–156 (IIGQ…SPSV), 208–228 (AQAV…TAVS), 239–259 (GMAA…AYVS), 279–299 (LVIF…YNAF), 313–333 (IGGI…IPIL), and 399–419 (KITV…IITL).

It belongs to the glycosyltransferase 4 family. MraY subfamily. Requires Mg(2+) as cofactor.

The protein resides in the cell inner membrane. It carries out the reaction UDP-N-acetyl-alpha-D-muramoyl-L-alanyl-gamma-D-glutamyl-meso-2,6-diaminopimeloyl-D-alanyl-D-alanine + di-trans,octa-cis-undecaprenyl phosphate = di-trans,octa-cis-undecaprenyl diphospho-N-acetyl-alpha-D-muramoyl-L-alanyl-D-glutamyl-meso-2,6-diaminopimeloyl-D-alanyl-D-alanine + UMP. The protein operates within cell wall biogenesis; peptidoglycan biosynthesis. Its function is as follows. Catalyzes the initial step of the lipid cycle reactions in the biosynthesis of the cell wall peptidoglycan: transfers peptidoglycan precursor phospho-MurNAc-pentapeptide from UDP-MurNAc-pentapeptide onto the lipid carrier undecaprenyl phosphate, yielding undecaprenyl-pyrophosphoryl-MurNAc-pentapeptide, known as lipid I. The chain is Phospho-N-acetylmuramoyl-pentapeptide-transferase from Phocaeicola vulgatus (strain ATCC 8482 / DSM 1447 / JCM 5826 / CCUG 4940 / NBRC 14291 / NCTC 11154) (Bacteroides vulgatus).